Consider the following 385-residue polypeptide: Isomaltose glucohydrolase (385 aa).

Residue Trp-125 participates in substrate binding. Asp-175 (proton acceptor) is an active-site residue. Glu-178 serves as the catalytic Proton donor. Residue Glu-335 is the Proton acceptor of the active site.

It belongs to the glycosyl hydrolase 15 family.

It localises to the cytoplasm. It carries out the reaction isomaltose + H2O = beta-D-glucose + D-glucose. Its function is as follows. Involved in the intracellular degradation of the cyclic tetrasaccharide cyclobis-(1-6)-alpha-nigerosyl (CNN) formed extracellularly from starch. Catalyzes the hydrolysis of alpha-1,6-glucosidic linkage from the non-reducing end of isomaltose to yield beta-D-glucose and D-glucose. Can also act on panose and isomaltotriose at a lower rate. It displays low or no activity toward CNN and the general GH15 enzyme substrates such as maltose, soluble starch or dextran. This chain is Isomaltose glucohydrolase, found in Kribbella flavida (strain DSM 17836 / JCM 10339 / NBRC 14399).